The primary structure comprises 255 residues: tRNA (guanine-N(7)-)-methyltransferase (255 aa).

A disordered region spans residues 1 to 29 (MMHDDPNEAGLPPDDAALPDEAADGADEV). A compositionally biased stretch (acidic residues) spans 17–27 (ALPDEAADGAD). 4 residues coordinate S-adenosyl-L-methionine: Glu86, Glu111, Asp138, and Asp161. Asp161 is a catalytic residue. Residues Lys165, Asp197, and 232-235 (TKFE) contribute to the substrate site.

The protein belongs to the class I-like SAM-binding methyltransferase superfamily. TrmB family.

It carries out the reaction guanosine(46) in tRNA + S-adenosyl-L-methionine = N(7)-methylguanosine(46) in tRNA + S-adenosyl-L-homocysteine. It participates in tRNA modification; N(7)-methylguanine-tRNA biosynthesis. Functionally, catalyzes the formation of N(7)-methylguanine at position 46 (m7G46) in tRNA. The protein is tRNA (guanine-N(7)-)-methyltransferase of Burkholderia ambifaria (strain ATCC BAA-244 / DSM 16087 / CCUG 44356 / LMG 19182 / AMMD) (Burkholderia cepacia (strain AMMD)).